The chain runs to 181 residues: Peptidyl-tRNA hydrolase (181 aa).

TRNA is bound at residue Tyr14. The active-site Proton acceptor is the His19. Residues Tyr62, Asn64, and Asn108 each contribute to the tRNA site.

It belongs to the PTH family. As to quaternary structure, monomer.

The protein resides in the cytoplasm. It carries out the reaction an N-acyl-L-alpha-aminoacyl-tRNA + H2O = an N-acyl-L-amino acid + a tRNA + H(+). In terms of biological role, hydrolyzes ribosome-free peptidyl-tRNAs (with 1 or more amino acids incorporated), which drop off the ribosome during protein synthesis, or as a result of ribosome stalling. Functionally, catalyzes the release of premature peptidyl moieties from peptidyl-tRNA molecules trapped in stalled 50S ribosomal subunits, and thus maintains levels of free tRNAs and 50S ribosomes. The polypeptide is Peptidyl-tRNA hydrolase (Campylobacter jejuni subsp. jejuni serotype O:23/36 (strain 81-176)).